We begin with the raw amino-acid sequence, 662 residues long: tRNA 5-methylaminomethyl-2-thiouridine biosynthesis bifunctional protein MnmC (662 aa).

Residues Met-1–Ala-245 form a tRNA (mnm(5)s(2)U34)-methyltransferase region. Positions Ile-270 to Lys-662 are FAD-dependent cmnm(5)s(2)U34 oxidoreductase.

The protein in the N-terminal section; belongs to the methyltransferase superfamily. tRNA (mnm(5)s(2)U34)-methyltransferase family. In the C-terminal section; belongs to the DAO family. Requires FAD as cofactor.

It localises to the cytoplasm. It carries out the reaction 5-aminomethyl-2-thiouridine(34) in tRNA + S-adenosyl-L-methionine = 5-methylaminomethyl-2-thiouridine(34) in tRNA + S-adenosyl-L-homocysteine + H(+). Its function is as follows. Catalyzes the last two steps in the biosynthesis of 5-methylaminomethyl-2-thiouridine (mnm(5)s(2)U) at the wobble position (U34) in tRNA. Catalyzes the FAD-dependent demodification of cmnm(5)s(2)U34 to nm(5)s(2)U34, followed by the transfer of a methyl group from S-adenosyl-L-methionine to nm(5)s(2)U34, to form mnm(5)s(2)U34. The sequence is that of tRNA 5-methylaminomethyl-2-thiouridine biosynthesis bifunctional protein MnmC from Klebsiella pneumoniae subsp. pneumoniae (strain ATCC 700721 / MGH 78578).